A 445-amino-acid chain; its full sequence is Transcription activator AFTR-1 (445 aa).

Residues Cys-17–Cys-44 constitute a DNA-binding region (zn(2)-C6 fungal-type). The interval Arg-50 to Gln-89 is disordered. Basic residues predominate over residues Arg-51–Arg-60. Residues Pro-77–Gln-89 show a composition bias toward polar residues.

The protein resides in the nucleus. In terms of biological role, transcription factor that regulates the expression of the gene clusters that mediate the biosynthesis of the host-selective toxins (HSTs) AF-toxins responsible for Alternaria black spot of strawberry disease by the strawberry pathotype. On cellular level, AF-toxins affect plasma membrane of susceptible cells and cause a sudden increase in loss of K(+) after a few minutes of toxin treatment. In Alternaria alternata (Alternaria rot fungus), this protein is Transcription activator AFTR-1.